A 396-amino-acid chain; its full sequence is Elongation factor Tu 1 (396 aa).

Residues K10–E206 form the tr-type G domain. Positions G19–T26 are G1. G19–T26 contributes to the GTP binding site. T26 provides a ligand contact to Mg(2+). The tract at residues G60–N64 is G2. The G3 stretch occupies residues D81–G84. GTP is bound by residues D81–H85 and N136–D139. The tract at residues N136–D139 is G4. Residues S174–L176 are G5.

It belongs to the TRAFAC class translation factor GTPase superfamily. Classic translation factor GTPase family. EF-Tu/EF-1A subfamily. In terms of assembly, monomer.

The protein localises to the cytoplasm. The catalysed reaction is GTP + H2O = GDP + phosphate + H(+). GTP hydrolase that promotes the GTP-dependent binding of aminoacyl-tRNA to the A-site of ribosomes during protein biosynthesis. This Psychrobacter sp. (strain PRwf-1) protein is Elongation factor Tu 1.